We begin with the raw amino-acid sequence, 236 residues long: Ribose-5-phosphate isomerase A (236 aa).

Substrate contacts are provided by residues 28–31 (TGST), 83–86 (DGAD), and 96–99 (KGGG). The active-site Proton acceptor is E105. K123 is a binding site for substrate.

The protein belongs to the ribose 5-phosphate isomerase family. Homodimer.

It carries out the reaction aldehydo-D-ribose 5-phosphate = D-ribulose 5-phosphate. Its pathway is carbohydrate degradation; pentose phosphate pathway; D-ribose 5-phosphate from D-ribulose 5-phosphate (non-oxidative stage): step 1/1. Catalyzes the reversible conversion of ribose-5-phosphate to ribulose 5-phosphate. The protein is Ribose-5-phosphate isomerase A of Afipia carboxidovorans (strain ATCC 49405 / DSM 1227 / KCTC 32145 / OM5) (Oligotropha carboxidovorans).